Reading from the N-terminus, the 522-residue chain is Na(+)/H(+) antiporter NhaB (522 aa).

A run of 11 helical transmembrane segments spans residues 25–45 (VFLVINPFIFWFHPFIAGWLL), 49–69 (FIFTLAMALKCYPLQPGGMLA), 87–107 (ILANFEVILLLMFMVAGIYFM), 128–162 (LSLAFCLTAAFLSAFLDALTVIAVIISVAMGFYGV), 201–221 (LMMHAAVGTALGGVMTLVGEP), 237–257 (FFFRMSPVTLLTLISGVVTCI), 302–322 (VFVGIWLIIGLAFHLASVGLI), 356–376 (LVVFFSVVAVIIDQHLFAPVI), 388–408 (LLLFYIFNGVLSAISDNVFVA), 446–466 (ATPNGQAAFLFLLTSSISPLI), and 476–496 (MALPYTIVLSIVGLLAVEYVL).

This sequence belongs to the NhaB Na(+)/H(+) (TC 2.A.34) antiporter family.

Its subcellular location is the cell inner membrane. The catalysed reaction is 2 Na(+)(in) + 3 H(+)(out) = 2 Na(+)(out) + 3 H(+)(in). Its function is as follows. Na(+)/H(+) antiporter that extrudes sodium in exchange for external protons. This chain is Na(+)/H(+) antiporter NhaB, found in Actinobacillus succinogenes (strain ATCC 55618 / DSM 22257 / CCUG 43843 / 130Z).